Here is a 744-residue protein sequence, read N- to C-terminus: CCR4-NOT transcription complex subunit 10 (744 aa).

Residues 1 to 16 are compositionally biased toward basic and acidic residues; sequence MAADKPADQGAEKHEG. Positions 1-26 are disordered; it reads MAADKPADQGAEKHEGAGQSSGVTDQ. A2 is subject to N-acetylalanine. Residues 73-107 adopt a coiled-coil conformation; it reads FKNNQTTTDNLRQTLNQLKNQVHSAVEEMDGLDDV. Disordered regions lie at residues 182–203, 475–521, and 602–634; these read GSGG…GSNP, EQQD…PPSS, and VSLG…PQCY. Polar residues predominate over residues 484–495; that stretch reads GSKSSSQLGGNT. Positions 496–506 are enriched in low complexity; the sequence is ESSESSETCSS. Over residues 602–612 the composition is skewed to polar residues; sequence VSLGISSNEQD.

The protein belongs to the CNOT10 family. As to quaternary structure, component of the CCR4-NOT complex; distinct complexes seem to exist that differ in the participation of probably mutually exclusive catalytic subunits. CNOT10 and CNOT11 form a subcomplex docked to the CNOT1 scaffold.

The protein localises to the cytoplasm. It is found in the nucleus. Functionally, component of the CCR4-NOT complex which is one of the major cellular mRNA deadenylases and is linked to various cellular processes including bulk mRNA degradation, miRNA-mediated repression, translational repression during translational initiation and general transcription regulation. Additional complex functions may be a consequence of its influence on mRNA expression. Is not required for association of CNOT7 to the CCR4-NOT complex. The polypeptide is CCR4-NOT transcription complex subunit 10 (Cnot10) (Mus musculus (Mouse)).